The following is a 249-amino-acid chain: Acidic leucine-rich nuclear phosphoprotein 32 family member A (249 aa).

Thr15 is subject to Phosphothreonine. Ser17 bears the Phosphoserine mark. LRR repeat units follow at residues Asp18–Phe41, Glu43–Asn64, Lys65–Cys87, and Asn89–Lys110. The LRRCT domain occupies Cys123 to Glu161. Positions Gly147 to Pro156 are enriched in basic and acidic residues. The disordered stretch occupies residues Gly147–Asp249. The necessary for tumor-suppressive function stretch occupies residues Arg150–Glu174. The span at Asp157–Glu230 shows a compositional bias: acidic residues. Residues Ser158 and Ser204 each carry the phosphoserine modification. Residues Glu165–Asp249 form an interaction with E4F1 region.

Belongs to the ANP32 family. As to quaternary structure, component of the SET complex, composed of at least ANP32A, APEX1, HMGB2, NME1, SET and TREX1. Directly interacts with SET. Interacts with ATXN1/SCA1. Interacts with MAP1B. Interacts with ELAVL1. Part of the INHAT (inhibitor of histone acetyltransferases) complex. Interacts with E4F1. Phosphorylated on serine residues, at least in part by casein kinase 2/CK2. Post-translationally, some glutamate residues are glycylated by TTLL8. This modification occurs exclusively on glutamate residues and results in a glycine chain on the gamma-carboxyl group.

The protein resides in the nucleus. Its subcellular location is the cytoplasm. The protein localises to the endoplasmic reticulum. Multifunctional protein that is involved in the regulation of many processes including tumor suppression, apoptosis, cell cycle progression or transcription. Promotes apoptosis by favouring the activation of caspase-9/CASP9 and allowing apoptosome formation. In addition, plays a role in the modulation of histone acetylation and transcription as part of the INHAT (inhibitor of histone acetyltransferases) complex. Inhibits the histone-acetyltranferase activity of EP300/CREBBP (CREB-binding protein) and EP300/CREBBP-associated factor by histone masking. Preferentially binds to unmodified histone H3 and sterically inhibiting its acetylation and phosphorylation leading to cell growth inhibition. Participates in other biochemical processes such as regulation of mRNA nuclear-to-cytoplasmic translocation and stability by its association with ELAVL1 (Hu-antigen R). Plays a role in E4F1-mediated transcriptional repression as well as inhibition of protein phosphatase 2A. In Canis lupus familiaris (Dog), this protein is Acidic leucine-rich nuclear phosphoprotein 32 family member A (ANP32A).